The primary structure comprises 399 residues: Argininosuccinate synthase (399 aa).

12-20 contributes to the ATP binding site; that stretch reads AFSGGLDTS. L-citrulline is bound at residue Tyr-90. ATP is bound at residue Gly-120. The L-aspartate site is built by Thr-122, Asn-126, and Asp-127. Residue Asn-126 participates in L-citrulline binding. L-citrulline-binding residues include Arg-130, Ser-175, Glu-260, and Tyr-272.

Belongs to the argininosuccinate synthase family. Type 1 subfamily. In terms of assembly, homotetramer.

It localises to the cytoplasm. It catalyses the reaction L-citrulline + L-aspartate + ATP = 2-(N(omega)-L-arginino)succinate + AMP + diphosphate + H(+). Its pathway is amino-acid biosynthesis; L-arginine biosynthesis; L-arginine from L-ornithine and carbamoyl phosphate: step 2/3. This is Argininosuccinate synthase from Methanothermobacter thermautotrophicus (strain ATCC 29096 / DSM 1053 / JCM 10044 / NBRC 100330 / Delta H) (Methanobacterium thermoautotrophicum).